The primary structure comprises 268 residues: Thiazole synthase (268 aa).

Lys100 (schiff-base intermediate with DXP) is an active-site residue. 1-deoxy-D-xylulose 5-phosphate contacts are provided by residues Gly161, 187-188, and 209-210; these read AG and NT. The interval 248 to 268 is disordered; the sequence is ASPSSPAEGMFTGTQHPAANS. Residues 259-268 show a composition bias toward polar residues; that stretch reads TGTQHPAANS.

It belongs to the ThiG family. Homotetramer. Forms heterodimers with either ThiH or ThiS.

It localises to the cytoplasm. The enzyme catalyses [ThiS sulfur-carrier protein]-C-terminal-Gly-aminoethanethioate + 2-iminoacetate + 1-deoxy-D-xylulose 5-phosphate = [ThiS sulfur-carrier protein]-C-terminal Gly-Gly + 2-[(2R,5Z)-2-carboxy-4-methylthiazol-5(2H)-ylidene]ethyl phosphate + 2 H2O + H(+). The protein operates within cofactor biosynthesis; thiamine diphosphate biosynthesis. Its function is as follows. Catalyzes the rearrangement of 1-deoxy-D-xylulose 5-phosphate (DXP) to produce the thiazole phosphate moiety of thiamine. Sulfur is provided by the thiocarboxylate moiety of the carrier protein ThiS. In vitro, sulfur can be provided by H(2)S. The protein is Thiazole synthase of Nitrosomonas europaea (strain ATCC 19718 / CIP 103999 / KCTC 2705 / NBRC 14298).